The primary structure comprises 36 residues: Tddefensin (36 aa).

Disulfide bonds link Cys3-Cys24, Cys10-Cys32, and Cys14-Cys34.

This sequence belongs to the invertebrate defensin family. As to expression, expressed by the venom gland.

It is found in the secreted. Its function is as follows. Antibacterial peptide mostly active against Gram-positive bacteria. This Tityus discrepans (Venezuelan scorpion) protein is Tddefensin.